A 240-amino-acid polypeptide reads, in one-letter code: Ubiquinone biosynthesis O-methyltransferase (240 aa).

S-adenosyl-L-methionine-binding residues include Arg44, Gly64, Asp85, and Met129.

Belongs to the methyltransferase superfamily. UbiG/COQ3 family.

The catalysed reaction is a 3-demethylubiquinol + S-adenosyl-L-methionine = a ubiquinol + S-adenosyl-L-homocysteine + H(+). The enzyme catalyses a 3-(all-trans-polyprenyl)benzene-1,2-diol + S-adenosyl-L-methionine = a 2-methoxy-6-(all-trans-polyprenyl)phenol + S-adenosyl-L-homocysteine + H(+). Its pathway is cofactor biosynthesis; ubiquinone biosynthesis. Functionally, O-methyltransferase that catalyzes the 2 O-methylation steps in the ubiquinone biosynthetic pathway. This Escherichia coli O9:H4 (strain HS) protein is Ubiquinone biosynthesis O-methyltransferase.